Reading from the N-terminus, the 226-residue chain is MISMLLADSELELVPREIVGYPAVRLNARKRNKSPAKSILDASLHHSAMRALPMGDRRGRPDIVHVFLLVALESVLNRVGQLRVYIHTRNNEMITIDPTTRIPKNYPRFVGLMESLFEKGSVPEREPLIVMQRDRDIGACIGEIPHEKVILLSPKGRRVRLSDYVKECDNALFILGGFPKGEFISDVLSEADDTISIYEESLSVWTVASEILVNYENHVLEASAPS.

Residues Gly-176, Gly-181, and 197 to 202 contribute to the S-adenosyl-L-methionine site; that span reads IYEESL.

It belongs to the class IV-like SAM-binding methyltransferase superfamily. RNA methyltransferase NEP1 family. Homodimer.

The enzyme catalyses a pseudouridine in rRNA + S-adenosyl-L-methionine = an N(1)-methylpseudouridine in rRNA + S-adenosyl-L-homocysteine + H(+). Functionally, methyltransferase involved in ribosomal biogenesis. Specifically catalyzes the N1-methylation of the pseudouridine corresponding to position 914 in M.jannaschii 16S rRNA. The sequence is that of Ribosomal RNA small subunit methyltransferase Nep1 from Methanothrix thermoacetophila (strain DSM 6194 / JCM 14653 / NBRC 101360 / PT) (Methanosaeta thermophila).